The following is an 851-amino-acid chain: MAAATEENMSVAALVMSVPDNIGRSPEVEGGGAAGEEKDAATKGTVAVGDSEEDGEDVFEVERILDMKCEGGKNLYKVRWKGYTSDDDTWEPEVHLEDCKEVLLEFRKKVAENKAKAVRKDIQKLSLNNDIFEADSDIDQQGDTKEDTSPRKKKKKIKYKEDKSPDDLRKKRAKMGKLKDKFKTELESTSEILGFDVKTKKRILEVKEELKDSKKPKKDEIKETKKTKRADIRDLKIKIREDVKDNRKTKKERYIDSPLESESPNDSFTLEDESEDFLSDNKEKQNVRTAKDKTGQDTVQESIFEKHLDDLISIEEAGTRVRRKKKQPRKFEEPKEIKKLENTNNFLERKMIPKKQRNQDKGRSNPELSKLPSPVFAQTMKSLRLSGEEKGLKSSDLAEEEKERKNEPKEKYQKRYDFDKEEKARKEPKGLKSFKEIRNAFDLFKKTAEEKNDLENNSKREEISLDYKITHDNKTKDKCSLREERNTRDETDTWAYIAAEGDQEVSDSVCQTDESSDGKQPILSLGMDLQLEWMKLEDFQKHLDGEDEPFITANRIPSNLLRDAVKNGDYIAVKVALNSNEEYNLDQEDSTGMTLVMLAAAGGQDDLLRLLITKGAKVNGRQKNGTTALIHAAEKNFLTTVAILLEAGAFVNVQQSNGETALMKACKRGNSDIVRLVIECGADCNILSKHQNSALYFAKQCNNVLVYELLKSHLETLSRVAEETIRDYFESRLALLEPVFPIACHRLCEGPDFSTDFNYMPPQNMPEGSGVLLFIFHANFLGKDVIARLCGPCSVQAVVLNDKFQLPVFLDSHFVYSFSPVAGPNKLFIRLTEAPFAKVKLLIGAYRVQLQ.

The tract at residues 21–54 is disordered; that stretch reads NIGRSPEVEGGGAAGEEKDAATKGTVAVGDSEED. A phosphoserine mark is found at Ser-51, Ser-85, and Ser-136. Residues 59–118 form the Chromo domain; it reads FEVERILDMKCEGGKNLYKVRWKGYTSDDDTWEPEVHLEDCKEVLLEFRKKVAENKAKAV. Residues 80–87 are histone H3K9me3 binding; that stretch reads WKGYTSDD. Residues 133 to 174 form a disordered region; it reads EADSDIDQQGDTKEDTSPRKKKKKIKYKEDKSPDDLRKKRAK. Thr-144 bears the Phosphothreonine mark. Ser-149 and Ser-164 each carry phosphoserine; by CDK1. A compositionally biased stretch (basic and acidic residues) spans 159–169; the sequence is YKEDKSPDDLR. Phosphoserine is present on residues Ser-188, Ser-263, Ser-267, and Ser-274. Residues 240–302 are disordered; that stretch reads REDVKDNRKT…KTGQDTVQES (63 aa). The segment covering 269–278 has biased composition (acidic residues); the sequence is TLEDESEDFL. Basic and acidic residues predominate over residues 279-295; it reads SDNKEKQNVRTAKDKTG. A Phosphoserine modification is found at Ser-313. The segment at 315 to 428 is disordered; that stretch reads EEAGTRVRRK…DKEEKARKEP (114 aa). The span at 329-364 shows a compositional bias: basic and acidic residues; sequence RKFEEPKEIKKLENTNNFLERKMIPKKQRNQDKGRS. At Thr-379 the chain carries Phosphothreonine; by CDK1. Phosphoserine is present on residues Ser-386 and Ser-394. A compositionally biased stretch (basic and acidic residues) spans 401-428; that stretch reads EKERKNEPKEKYQKRYDFDKEEKARKEP. Position 447 is a phosphothreonine (Thr-447). ANK repeat units follow at residues 591–620, 624–653, 657–686, and 690–719; these read TGMT…KVNG, NGTT…FVNV, NGET…DCNI, and HQNS…TLSR.

As to quaternary structure, homodimer. Interacts (via chromo domain) with histone H3K9me3. Has the highest affinity for H3K9me3, and lesser affinity for H3K9me2 and H3K9me1. Component of the HUSH complex; at least composed of TASOR, PPHLN1 and MPHOSPH8. Interacts with DNMT3, EHMT1 and SETDB1. Interacts with MORC2; the interaction associateS MORC2 with the HUSH complex which recruits MORC2 to heterochromatic loci. Interacts with ZNF638; leading to recruitment of the HUSH complex to unintegrated retroviral DNA. Interacts with TASOR. Post-translationally, phosphorylated in M (mitotic) phase. Phosphorylation by CDK1 promotes dissociation from chromatin.

It localises to the nucleus. It is found in the chromosome. Its function is as follows. Heterochromatin component that specifically recognizes and binds methylated 'Lys-9' of histone H3 (H3K9me) and promotes recruitment of proteins that mediate epigenetic repression. Mediates recruitment of the HUSH complex to H3K9me3 sites: the HUSH complex is recruited to genomic loci rich in H3K9me3 and is required to maintain transcriptional silencing by promoting recruitment of SETDB1, a histone methyltransferase that mediates further deposition of H3K9me3, as well as MORC2. Binds H3K9me and promotes DNA methylation by recruiting DNMT3A to target CpG sites; these can be situated within the coding region of the gene. Mediates down-regulation of CDH1 expression. Also represses L1 retrotransposons in collaboration with MORC2 and, probably, SETDB1, the silencing is dependent of repressive epigenetic modifications, such as H3K9me3 mark. Silencing events often occur within introns of transcriptionally active genes, and lead to the down-regulation of host gene expression. The HUSH complex is also involved in the silencing of unintegrated retroviral DNA by being recruited by ZNF638: some part of the retroviral DNA formed immediately after infection remains unintegrated in the host genome and is transcriptionally repressed. This Rattus norvegicus (Rat) protein is M-phase phosphoprotein 8.